A 299-amino-acid chain; its full sequence is MSETTKDDGSSQKKSVRKEKRAYVLRKWTQFDVGRASTVGTVHLLCLLAPFNYKWEAFRFGIILAILTNLCITFSYHRNLTHRSFKLPKWLEYPFAYSALLALQGDPLDWVSIHRFHHQFTDSDRDPHSPIEGFWFSHVLWIFDTDYIREKCGRRNNVMDLKQQWFYRFLKKTLVLHILAFWTLIYLWGGLPYLTWTVGFGGVIGYHGTWLVNSACHICGSQAWQTNDTSRNVWWLALLTMGESWHNNHHAFETSARHGLEWYQLDITWYLIWFFQALGLATNVKLPTDAQKRKMAIRR.

The chain crosses the membrane as a helical span at residues 55–75 (WEAFRFGIILAILTNLCITFS). The short motif at 77-82 (HRNLTH) is the Histidine box-1 element. The short motif at 114-118 (HRFHH) is the Histidine box-2 element. Residues 174–194 (LVLHILAFWTLIYLWGGLPYL) traverse the membrane as a helical segment. Positions 246–250 (HNNHH) match the Histidine box-3 motif. A helical transmembrane segment spans residues 262–282 (WYQLDITWYLIWFFQALGLAT).

The protein belongs to the fatty acid desaturase type 1 family. The cofactor is Fe cation.

It localises to the endoplasmic reticulum membrane. It participates in lipid metabolism; polyunsaturated fatty acid biosynthesis. This chain is Delta-9 desaturase-like 2 protein, found in Arabidopsis thaliana (Mouse-ear cress).